Consider the following 261-residue polypeptide: Snake venom serine protease (261 aa).

The N-terminal stretch at 1–20 (MALIGVLANLLILCLSYART) is a signal peptide. Positions 21–24 (APDR) are excised as a propeptide. Residues 25 to 249 (IIGGLECNQN…YIDWIQDIMA (225 aa)) enclose the Peptidase S1 domain. 6 disulfide bridges follow: Cys31-Cys163, Cys50-Cys66, Cys98-Cys256, Cys142-Cys210, Cys174-Cys189, and Cys200-Cys225. His65 (charge relay system) is an active-site residue. N-linked (GlcNAc...) asparagine glycosylation is present at Asn103. Asp110 functions as the Charge relay system in the catalytic mechanism. N-linked (GlcNAc...) asparagine glycosylation is found at Asn117 and Asn121. The active-site Charge relay system is Ser204.

This sequence belongs to the peptidase S1 family. Snake venom subfamily. As to quaternary structure, monomer. Expressed by the venom gland.

The protein localises to the secreted. Snake venom serine protease that may act in the hemostasis system of the prey. The chain is Snake venom serine protease from Philodryas olfersii (Green snake).